Here is a 375-residue protein sequence, read N- to C-terminus: Muconate cycloisomerase 1 (375 aa).

Lys171 serves as the catalytic Proton acceptor. Mn(2+)-binding residues include Asp200, Glu226, and Asp251. The active-site Proton donor is the Glu329.

This sequence belongs to the mandelate racemase/muconate lactonizing enzyme family. In terms of assembly, homooctamer. Mn(2+) serves as cofactor.

It carries out the reaction (S)-muconolactone = cis,cis-muconate + H(+). It functions in the pathway aromatic compound metabolism; beta-ketoadipate pathway; 5-oxo-4,5-dihydro-2-furylacetate from catechol: step 2/3. Functionally, catalyzes a syn cycloisomerization. This is Muconate cycloisomerase 1 (catB) from Pseudomonas putida (Arthrobacter siderocapsulatus).